A 329-amino-acid polypeptide reads, in one-letter code: 3'-5' exonuclease (329 aa).

A disordered region spans residues 26–88; that stretch reads EEKPKPKKVV…MADVGTPSPE (63 aa). A compositionally biased stretch (basic and acidic residues) spans 46 to 65; that stretch reads KNLDTPEIVNKENAEVENPP. Residues Ser-78 and Ser-86 each carry the phosphoserine modification. Residues 130-288 enclose the 3'-5' exonuclease domain; the sequence is TEIVPMAFDM…IGQVIYREIE (159 aa). Residues Asp-138, Glu-140, and Asp-276 each coordinate Mg(2+).

This sequence belongs to the WRNexo family.

The protein resides in the nucleus. Has exonuclease activity on both single-stranded and duplex templates bearing overhangs, but not blunt ended duplex DNA, and cleaves in a 3'-5' direction. Essential for the formation of DNA replication focal centers. Has an important role in maintaining genome stability. The protein is 3'-5' exonuclease of Drosophila mojavensis (Fruit fly).